The primary structure comprises 582 residues: Formate--tetrahydrofolate ligase (582 aa).

65-72 (TPLGEGKT) provides a ligand contact to ATP.

It belongs to the formate--tetrahydrofolate ligase family.

It catalyses the reaction (6S)-5,6,7,8-tetrahydrofolate + formate + ATP = (6R)-10-formyltetrahydrofolate + ADP + phosphate. The protein operates within one-carbon metabolism; tetrahydrofolate interconversion. The chain is Formate--tetrahydrofolate ligase from Vibrio atlanticus (strain LGP32) (Vibrio splendidus (strain Mel32)).